The sequence spans 79 residues: CDC42 small effector protein 1 (79 aa).

S-palmitoyl cysteine attachment occurs at residues C10 and C11. The region spanning 30–43 (IGEPMNFVHLTHIG) is the CRIB domain. The tract at residues 48–79 (GAGDGLAMTGAVQEQMRSKGNRDRPWSNSRGL) is disordered. The segment covering 63-72 (MRSKGNRDRP) has biased composition (basic and acidic residues).

The protein belongs to the CDC42SE/SPEC family. As to quaternary structure, interacts with CDC42 (in GTP-bound form). Interacts weakly with RAC1 and not at all with RHOA.

The protein localises to the cytoplasm. The protein resides in the cytoskeleton. It is found in the cell membrane. Its function is as follows. Probably involved in the organization of the actin cytoskeleton by acting downstream of CDC42, inducing actin filament assembly. Alters CDC42-induced cell shape changes. In activated T-cells, may play a role in CDC42-mediated F-actin accumulation at the immunological synapse. May play a role in early contractile events in phagocytosis in macrophages. In Bos taurus (Bovine), this protein is CDC42 small effector protein 1 (CDC42SE1).